The following is a 251-amino-acid chain: GTP cyclohydrolase 1 type 2 homolog (251 aa).

Residues His-63, His-64, Asp-101, His-219, and Glu-223 each contribute to the a divalent metal cation site.

This sequence belongs to the GTP cyclohydrolase I type 2/NIF3 family. As to quaternary structure, toroid-shaped homohexamer. In the hexamer, 3 dimers assemble to form a ring-like structure surrounding a central hole.

The sequence is that of GTP cyclohydrolase 1 type 2 homolog from Haemophilus influenzae (strain ATCC 51907 / DSM 11121 / KW20 / Rd).